We begin with the raw amino-acid sequence, 310 residues long: Ribosomal RNA small subunit methyltransferase H (310 aa).

S-adenosyl-L-methionine contacts are provided by residues 32 to 34, Asp-51, Phe-84, Asp-102, and Gln-109; that span reads AGH.

This sequence belongs to the methyltransferase superfamily. RsmH family.

The protein resides in the cytoplasm. It carries out the reaction cytidine(1402) in 16S rRNA + S-adenosyl-L-methionine = N(4)-methylcytidine(1402) in 16S rRNA + S-adenosyl-L-homocysteine + H(+). Functionally, specifically methylates the N4 position of cytidine in position 1402 (C1402) of 16S rRNA. The protein is Ribosomal RNA small subunit methyltransferase H of Campylobacter hominis (strain ATCC BAA-381 / DSM 21671 / CCUG 45161 / LMG 19568 / NCTC 13146 / CH001A).